We begin with the raw amino-acid sequence, 419 residues long: Farnesyl pyrophosphate synthase (419 aa).

Met1 bears the N-acetylmethionine mark. Isopentenyl diphosphate contacts are provided by Lys123, Arg126, and Gln162. Lys123 is subject to N6-(2-hydroxyisobutyryl)lysine; alternate. Lys123 carries the post-translational modification N6-acetyllysine; alternate. Positions 169 and 173 each coordinate Mg(2+). Dimethylallyl diphosphate is bound at residue Arg178. Residue Arg179 participates in isopentenyl diphosphate binding. Residues Lys266, Thr267, Gln306, Lys323, and Lys332 each coordinate dimethylallyl diphosphate. Lys353 carries the N6-acetyllysine modification.

Belongs to the FPP/GGPP synthase family. In terms of assembly, homodimer. Interacts with RSAD2. (Microbial infection) Interacts with HTLV-1 protein p13(II). Requires Mg(2+) as cofactor.

The protein resides in the cytoplasm. The enzyme catalyses isopentenyl diphosphate + dimethylallyl diphosphate = (2E)-geranyl diphosphate + diphosphate. It carries out the reaction isopentenyl diphosphate + (2E)-geranyl diphosphate = (2E,6E)-farnesyl diphosphate + diphosphate. Its pathway is isoprenoid biosynthesis; farnesyl diphosphate biosynthesis; farnesyl diphosphate from geranyl diphosphate and isopentenyl diphosphate: step 1/1. It participates in isoprenoid biosynthesis; geranyl diphosphate biosynthesis; geranyl diphosphate from dimethylallyl diphosphate and isopentenyl diphosphate: step 1/1. Its activity is regulated as follows. Inactivated by interferon-induced RSAD2. This inactivation may result of disruption of lipid rafts at the plasma membrane, and thus have an antiviral effect since many enveloped viruses need lipid rafts to bud efficiently out of the cell. In terms of biological role, key enzyme in isoprenoid biosynthesis which catalyzes the formation of farnesyl diphosphate (FPP), a precursor for several classes of essential metabolites including sterols, dolichols, carotenoids, and ubiquinones. FPP also serves as substrate for protein farnesylation and geranylgeranylation. Catalyzes the sequential condensation of isopentenyl pyrophosphate with the allylic pyrophosphates, dimethylallyl pyrophosphate, and then with the resultant geranylpyrophosphate to the ultimate product farnesyl pyrophosphate. This chain is Farnesyl pyrophosphate synthase, found in Homo sapiens (Human).